The sequence spans 289 residues: 33 kDa chaperonin (289 aa).

2 disulfide bridges follow: Cys-225-Cys-227 and Cys-258-Cys-261.

It belongs to the HSP33 family. Under oxidizing conditions two disulfide bonds are formed involving the reactive cysteines. Under reducing conditions zinc is bound to the reactive cysteines and the protein is inactive.

It localises to the cytoplasm. In terms of biological role, redox regulated molecular chaperone. Protects both thermally unfolding and oxidatively damaged proteins from irreversible aggregation. Plays an important role in the bacterial defense system toward oxidative stress. The chain is 33 kDa chaperonin from Nitrosococcus oceani (strain ATCC 19707 / BCRC 17464 / JCM 30415 / NCIMB 11848 / C-107).